The chain runs to 866 residues: Coiled-coil domain-containing protein 178 (866 aa).

Residues 1–21 (MPENEKEPAQPTTNEDALDTG) are disordered. 6 coiled-coil regions span residues 157–266 (ELKK…DYMA), 292–403 (EVME…DQYC), 439–480 (KDLT…EEEV), 514–539 (KTEELEDKLADLKRIFKGREELLKKL), 570–631 (RRQV…LLKK), and 665–705 (EKCI…REHV).

The chain is Coiled-coil domain-containing protein 178 (Ccdc178) from Mus musculus (Mouse).